The primary structure comprises 244 residues: Heat shock transcription factor (244 aa).

The DNA-binding element occupies 13-108 (IPKFIMKLYK…LLGFDDSLRM (96 aa)). The segment at 123 to 168 (DGSLKEIVEYLYVQNQELYTELSVCKERIERQERALNGLIEILSRV) is involved in trimerization. The interval 204 to 244 (EGCEPASPPLQDKGIPELSFKPGGIPHADSDTKDDNYDPFF) is disordered. Residues 231 to 244 (ADSDTKDDNYDPFF) are compositionally biased toward basic and acidic residues.

The protein belongs to the HSF family. As to quaternary structure, homotrimer. Homotrimerization increases the affinity of HSF1 to DNA.

It localises to the nucleus. Functionally, DNA-binding transcription factor that specifically binds heat shock promoter elements (HSE) and activates transcription. The polypeptide is Heat shock transcription factor (Encephalitozoon cuniculi (strain GB-M1) (Microsporidian parasite)).